Here is a 156-residue protein sequence, read N- to C-terminus: MFGKVSSLLVFASFLIIQGAFATLVAPIGDLEHLSEIELLYTNRVLPSKIPLTPFVKRDDDSSSTQASYSTTVSDVVIVTDKSWSDGVETIFPYSYTEYQPSTTYTSAPAGSIGYAASIPNTGRELMESGSPVRFSKSSLLIVSLLSIAAFAALVL.

The N-terminal stretch at 1–22 (MFGKVSSLLVFASFLIIQGAFA) is a signal peptide. Residue Ser129 is the site of GPI-anchor amidated serine attachment. The propeptide at 130–156 (GSPVRFSKSSLLIVSLLSIAAFAALVL) is removed in mature form.

The protein localises to the cell membrane. This is an uncharacterized protein from Schizosaccharomyces pombe (strain 972 / ATCC 24843) (Fission yeast).